The primary structure comprises 181 residues: Putative manganese efflux pump MntP (181 aa).

The next 6 helical transmembrane spans lie at 4-24 (VVLL…GLGA), 31-51 (VVLG…MPLI), 59-79 (MLGW…ALIA), 102-122 (VLLL…FALT), 129-149 (LVSC…GVFI), and 161-181 (AELA…AVAV).

Belongs to the MntP (TC 9.B.29) family.

Its subcellular location is the cell inner membrane. Probably functions as a manganese efflux pump. In Saccharophagus degradans (strain 2-40 / ATCC 43961 / DSM 17024), this protein is Putative manganese efflux pump MntP.